The sequence spans 316 residues: Lipoyl synthase (316 aa).

A compositionally biased stretch (basic and acidic residues) spans Met-1–Thr-15. Residues Met-1–Ser-33 form a disordered region. Positions 64, 69, 75, 90, 94, 97, and 304 each coordinate [4Fe-4S] cluster. One can recognise a Radical SAM core domain in the interval Phe-76–Thr-293.

It belongs to the radical SAM superfamily. Lipoyl synthase family. [4Fe-4S] cluster is required as a cofactor.

It is found in the cytoplasm. The catalysed reaction is [[Fe-S] cluster scaffold protein carrying a second [4Fe-4S](2+) cluster] + N(6)-octanoyl-L-lysyl-[protein] + 2 oxidized [2Fe-2S]-[ferredoxin] + 2 S-adenosyl-L-methionine + 4 H(+) = [[Fe-S] cluster scaffold protein] + N(6)-[(R)-dihydrolipoyl]-L-lysyl-[protein] + 4 Fe(3+) + 2 hydrogen sulfide + 2 5'-deoxyadenosine + 2 L-methionine + 2 reduced [2Fe-2S]-[ferredoxin]. Its pathway is protein modification; protein lipoylation via endogenous pathway; protein N(6)-(lipoyl)lysine from octanoyl-[acyl-carrier-protein]: step 2/2. Functionally, catalyzes the radical-mediated insertion of two sulfur atoms into the C-6 and C-8 positions of the octanoyl moiety bound to the lipoyl domains of lipoate-dependent enzymes, thereby converting the octanoylated domains into lipoylated derivatives. This chain is Lipoyl synthase, found in Hydrogenovibrio crunogenus (strain DSM 25203 / XCL-2) (Thiomicrospira crunogena).